The sequence spans 141 residues: Hemoglobin subunit alpha (141 aa).

A Globin domain is found at 1–141; that stretch reads VLSPADKTNV…VSTVLTSKYR (141 aa). Position 3 is a phosphoserine (serine 3). Lysine 7 carries the N6-succinyllysine modification. Position 8 is a phosphothreonine (threonine 8). The residue at position 11 (lysine 11) is an N6-succinyllysine. Residue lysine 16 is modified to N6-acetyllysine; alternate. Residue lysine 16 is modified to N6-succinyllysine; alternate. Tyrosine 24 carries the post-translational modification Phosphotyrosine. Lysine 40 carries the post-translational modification N6-succinyllysine. Histidine 58 contacts O2. Histidine 87 contacts heme b. Serine 102 carries the post-translational modification Phosphoserine. A Phosphothreonine modification is found at threonine 108. Phosphoserine is present on residues serine 124 and serine 131. Residues threonine 134 and threonine 137 each carry the phosphothreonine modification. Serine 138 carries the post-translational modification Phosphoserine.

The protein belongs to the globin family. Heterotetramer of two alpha chains and two beta chains. In terms of tissue distribution, red blood cells.

In terms of biological role, involved in oxygen transport from the lung to the various peripheral tissues. Its function is as follows. Hemopressin acts as an antagonist peptide of the cannabinoid receptor CNR1. Hemopressin-binding efficiently blocks cannabinoid receptor CNR1 and subsequent signaling. The protein is Hemoglobin subunit alpha (HBA) of Tursiops truncatus (Atlantic bottle-nosed dolphin).